The following is a 350-amino-acid chain: Uroporphyrinogen decarboxylase (350 aa).

Residues 28–32, D78, Y155, S210, and H325 each bind substrate; that span reads RQAGR.

It belongs to the uroporphyrinogen decarboxylase family. In terms of assembly, homodimer.

The protein localises to the cytoplasm. It catalyses the reaction uroporphyrinogen III + 4 H(+) = coproporphyrinogen III + 4 CO2. Its pathway is porphyrin-containing compound metabolism; protoporphyrin-IX biosynthesis; coproporphyrinogen-III from 5-aminolevulinate: step 4/4. Catalyzes the decarboxylation of four acetate groups of uroporphyrinogen-III to yield coproporphyrinogen-III. In Microcystis aeruginosa (strain NIES-843 / IAM M-2473), this protein is Uroporphyrinogen decarboxylase.